A 429-amino-acid polypeptide reads, in one-letter code: Glutamate-1-semialdehyde 2,1-aminomutase (429 aa).

Position 267 is an N6-(pyridoxal phosphate)lysine (lysine 267).

The protein belongs to the class-III pyridoxal-phosphate-dependent aminotransferase family. HemL subfamily. Homodimer. The cofactor is pyridoxal 5'-phosphate.

Its subcellular location is the cytoplasm. It catalyses the reaction (S)-4-amino-5-oxopentanoate = 5-aminolevulinate. Its pathway is porphyrin-containing compound metabolism; protoporphyrin-IX biosynthesis; 5-aminolevulinate from L-glutamyl-tRNA(Glu): step 2/2. The polypeptide is Glutamate-1-semialdehyde 2,1-aminomutase (Xanthomonas euvesicatoria pv. vesicatoria (strain 85-10) (Xanthomonas campestris pv. vesicatoria)).